The following is a 626-amino-acid chain: Phosphoenolpyruvate carboxykinase (ATP) 2 (626 aa).

Disordered regions lie at residues 1–23 (MASPNGGVTTYDYHDSDSAAPVN) and 64–86 (PNLVKGDPEATKGAPPVPIKHQQ). An ATP-binding site is contributed by 324–331 (GLSGTGKT).

Belongs to the phosphoenolpyruvate carboxykinase (ATP) family. Homohexamer.

Its subcellular location is the cytoplasm. The catalysed reaction is oxaloacetate + ATP = phosphoenolpyruvate + ADP + CO2. Its pathway is carbohydrate biosynthesis; gluconeogenesis. The sequence is that of Phosphoenolpyruvate carboxykinase (ATP) 2 (PCK2) from Urochloa panicoides (Panic liverseed grass).